Consider the following 378-residue polypeptide: Biotin synthase, mitochondrial (378 aa).

The N-terminal 26 residues, 1 to 26 (MMLVRSVFRSQLRPSVSGGLQSASCY), are a transit peptide targeting the mitochondrion. The region spanning 79–308 (REVQQCTLLS…KAMVRLSAGR (230 aa)) is the Radical SAM core domain. The [4Fe-4S] cluster site is built by Cys94, Cys98, and Cys101. [2Fe-2S] cluster-binding residues include Cys138, Cys171, Cys231, and Arg303. The interval 357–378 (PPSFSEDDSESENCEKVASASH) is disordered.

It belongs to the radical SAM superfamily. Biotin synthase family. The cofactor is [4Fe-4S] cluster. [2Fe-2S] cluster serves as cofactor.

The protein resides in the mitochondrion. It carries out the reaction (4R,5S)-dethiobiotin + (sulfur carrier)-SH + 2 reduced [2Fe-2S]-[ferredoxin] + 2 S-adenosyl-L-methionine = (sulfur carrier)-H + biotin + 2 5'-deoxyadenosine + 2 L-methionine + 2 oxidized [2Fe-2S]-[ferredoxin]. Its pathway is cofactor biosynthesis; biotin biosynthesis; biotin from 7,8-diaminononanoate: step 2/2. In Arabidopsis thaliana (Mouse-ear cress), this protein is Biotin synthase, mitochondrial (BIO2).